A 223-amino-acid chain; its full sequence is Deoxyribose-phosphate aldolase (223 aa).

Catalysis depends on aspartate 92, which acts as the Proton donor/acceptor. The Schiff-base intermediate with acetaldehyde role is filled by lysine 158. Catalysis depends on lysine 188, which acts as the Proton donor/acceptor.

The protein belongs to the DeoC/FbaB aldolase family. DeoC type 1 subfamily.

It localises to the cytoplasm. It carries out the reaction 2-deoxy-D-ribose 5-phosphate = D-glyceraldehyde 3-phosphate + acetaldehyde. It functions in the pathway carbohydrate degradation; 2-deoxy-D-ribose 1-phosphate degradation; D-glyceraldehyde 3-phosphate and acetaldehyde from 2-deoxy-alpha-D-ribose 1-phosphate: step 2/2. In terms of biological role, catalyzes a reversible aldol reaction between acetaldehyde and D-glyceraldehyde 3-phosphate to generate 2-deoxy-D-ribose 5-phosphate. The chain is Deoxyribose-phosphate aldolase from Mycobacterium avium (strain 104).